We begin with the raw amino-acid sequence, 254 residues long: MTVRVRVIPCLDVAGGRVVKGVNFVDLADAGDPVEQARVYDAAGADELCFLDITASHEGRGTILDVVARTAAVCFMPLTVGGGVRSADDARALLLAGADKVAVNSAAVARPELCAEMAERFGAQCVVGAVDARAVGPGKWEIYTHGGRKPTGIDAVEHAKRLASLGAGEILLTSMDRDGTRDGYDLALTRAISDAVPVPVIASGGVGNLGHLVEGVTRGGASAVLAASIFHFGQHSVAEAHAALRAAGLPVRNG.

Residues Asp12 and Asp131 contribute to the active site.

Belongs to the HisA/HisF family. In terms of assembly, heterodimer of HisH and HisF.

The protein localises to the cytoplasm. It carries out the reaction 5-[(5-phospho-1-deoxy-D-ribulos-1-ylimino)methylamino]-1-(5-phospho-beta-D-ribosyl)imidazole-4-carboxamide + L-glutamine = D-erythro-1-(imidazol-4-yl)glycerol 3-phosphate + 5-amino-1-(5-phospho-beta-D-ribosyl)imidazole-4-carboxamide + L-glutamate + H(+). It participates in amino-acid biosynthesis; L-histidine biosynthesis; L-histidine from 5-phospho-alpha-D-ribose 1-diphosphate: step 5/9. In terms of biological role, IGPS catalyzes the conversion of PRFAR and glutamine to IGP, AICAR and glutamate. The HisF subunit catalyzes the cyclization activity that produces IGP and AICAR from PRFAR using the ammonia provided by the HisH subunit. The sequence is that of Imidazole glycerol phosphate synthase subunit HisF from Rhizorhabdus wittichii (strain DSM 6014 / CCUG 31198 / JCM 15750 / NBRC 105917 / EY 4224 / RW1) (Sphingomonas wittichii).